The sequence spans 303 residues: Coenzyme PQQ synthesis protein B (303 aa).

It belongs to the PqqB family.

It participates in cofactor biosynthesis; pyrroloquinoline quinone biosynthesis. In terms of biological role, may be involved in the transport of PQQ or its precursor to the periplasm. In Pseudomonas syringae pv. tomato (strain ATCC BAA-871 / DC3000), this protein is Coenzyme PQQ synthesis protein B.